Reading from the N-terminus, the 870-residue chain is Leucine--tRNA ligase (870 aa).

The 'HIGH' region signature appears at 43-53; sequence PYPSGRLHMGH. A 'KMSKS' region motif is present at residues 626 to 630; it reads KMSKS. Lys629 is an ATP binding site.

This sequence belongs to the class-I aminoacyl-tRNA synthetase family.

The protein resides in the cytoplasm. It catalyses the reaction tRNA(Leu) + L-leucine + ATP = L-leucyl-tRNA(Leu) + AMP + diphosphate. The polypeptide is Leucine--tRNA ligase (Pseudoalteromonas atlantica (strain T6c / ATCC BAA-1087)).